Consider the following 353-residue polypeptide: Photosystem II protein D1 (353 aa).

The residue at position 2 (T2) is an N-acetylthreonine. T2 carries the post-translational modification Phosphothreonine. Transmembrane regions (helical) follow at residues 29–46 (YIGW…TATS), 118–133 (HFLL…EWEL), and 142–156 (WIAV…AATA). Position 118 (H118) interacts with chlorophyll a. Pheophytin a is bound at residue Y126. D170 and E189 together coordinate [CaMn4O5] cluster. Residues 197–218 (FHMLGVAGVFGSSLFSAMHGSL) form a helical membrane-spanning segment. H198 serves as a coordination point for chlorophyll a. Residues H215 and 264-265 (SF) contribute to the a quinone site. H215 is a binding site for Fe cation. Residue H272 participates in Fe cation binding. Residues 274 to 288 (FLAAWPVVGIWFTAL) form a helical membrane-spanning segment. H332, E333, D342, and A344 together coordinate [CaMn4O5] cluster. Residues 345 to 353 (AMEAPSVNG) constitute a propeptide that is removed on maturation.

Belongs to the reaction center PufL/M/PsbA/D family. As to quaternary structure, PSII is composed of 1 copy each of membrane proteins PsbA, PsbB, PsbC, PsbD, PsbE, PsbF, PsbH, PsbI, PsbJ, PsbK, PsbL, PsbM, PsbT, PsbX, PsbY, PsbZ, Psb30/Ycf12, at least 3 peripheral proteins of the oxygen-evolving complex and a large number of cofactors. It forms dimeric complexes. The cofactor is The D1/D2 heterodimer binds P680, chlorophylls that are the primary electron donor of PSII, and subsequent electron acceptors. It shares a non-heme iron and each subunit binds pheophytin, quinone, additional chlorophylls, carotenoids and lipids. D1 provides most of the ligands for the Mn4-Ca-O5 cluster of the oxygen-evolving complex (OEC). There is also a Cl(-1) ion associated with D1 and D2, which is required for oxygen evolution. The PSII complex binds additional chlorophylls, carotenoids and specific lipids.. Post-translationally, tyr-161 forms a radical intermediate that is referred to as redox-active TyrZ, YZ or Y-Z. In terms of processing, C-terminally processed by CTPA; processing is essential to allow assembly of the oxygen-evolving complex and thus photosynthetic growth.

It is found in the plastid. It localises to the chloroplast thylakoid membrane. The enzyme catalyses 2 a plastoquinone + 4 hnu + 2 H2O = 2 a plastoquinol + O2. Functionally, photosystem II (PSII) is a light-driven water:plastoquinone oxidoreductase that uses light energy to abstract electrons from H(2)O, generating O(2) and a proton gradient subsequently used for ATP formation. It consists of a core antenna complex that captures photons, and an electron transfer chain that converts photonic excitation into a charge separation. The D1/D2 (PsbA/PsbD) reaction center heterodimer binds P680, the primary electron donor of PSII as well as several subsequent electron acceptors. In Vigna unguiculata (Cowpea), this protein is Photosystem II protein D1.